A 485-amino-acid polypeptide reads, in one-letter code: Ataxin-10 (485 aa).

It belongs to the ataxin-10 family.

It localises to the cytoplasm. It is found in the perinuclear region. The protein resides in the midbody. Its function is as follows. May play a role in the regulation of cytokinesis. May play a role in signaling by stimulating protein glycosylation. Induces neuritogenesis by activating the Ras-MAP kinase pathway and is necessary for the survival of cerebellar neurons. Does not appear to play a major role in ciliogenesis. In Xenopus tropicalis (Western clawed frog), this protein is Ataxin-10 (atxn10).